Consider the following 651-residue polypeptide: Aspartate--tRNA ligase, mitochondrial (651 aa).

Residues 1-44 (MFCWLSRLCGELSTPTRRTTQLIWSSAARSMVLSSQRIPELSSF) constitute a mitochondrion transit peptide. Thr-216 is subject to Phosphothreonine. Residue Ser-239 is modified to Phosphoserine. The interval 241–244 (QQFK) is aspartate. Arg-263 serves as a coordination point for L-aspartate. 263–265 (RDE) serves as a coordination point for ATP. Lys-379 is modified (N6-acetyllysine). Glu-532 provides a ligand contact to ATP. Arg-539 is a binding site for L-aspartate. 581-584 (GLDR) contributes to the ATP binding site.

It belongs to the class-II aminoacyl-tRNA synthetase family. Type 1 subfamily. As to quaternary structure, homodimer.

The protein resides in the mitochondrion matrix. It localises to the mitochondrion membrane. The catalysed reaction is tRNA(Asp) + L-aspartate + ATP = L-aspartyl-tRNA(Asp) + AMP + diphosphate. In terms of biological role, catalyzes the attachment of aspartate to tRNA(Asp) in a two-step reaction: aspartate is first activated by ATP to form Asp-AMP and then transferred to the acceptor end of tRNA(Asp). The sequence is that of Aspartate--tRNA ligase, mitochondrial (DARS2) from Bos taurus (Bovine).